Consider the following 68-residue polypeptide: DNA-directed RNA polymerase subunit omega (68 aa).

It belongs to the RNA polymerase subunit omega family. In terms of assembly, the RNAP catalytic core consists of 2 alpha, 1 beta, 1 beta' and 1 omega subunit. When a sigma factor is associated with the core the holoenzyme is formed, which can initiate transcription.

The enzyme catalyses RNA(n) + a ribonucleoside 5'-triphosphate = RNA(n+1) + diphosphate. In terms of biological role, promotes RNA polymerase assembly. Latches the N- and C-terminal regions of the beta' subunit thereby facilitating its interaction with the beta and alpha subunits. The polypeptide is DNA-directed RNA polymerase subunit omega (Dechloromonas aromatica (strain RCB)).